Reading from the N-terminus, the 656-residue chain is Pumilio homology domain family member 6 (656 aa).

A disordered region spans residues 1–107; the sequence is MAPLTKKTNG…GGENGNHTEQ (107 aa). The segment covering 13–23 has biased composition (basic and acidic residues); sequence SAKEVSHSEKK. Phosphoserine; by CK2 occurs at positions 31, 34, and 35. 2 positions are modified to phosphoserine: Ser-34 and Ser-35. A compositionally biased stretch (acidic residues) spans 52–89; the sequence is SDDDDLDDLSTSDSEAEEEADELDISDDSEEHENENEE. Basic and acidic residues predominate over residues 90–107; the sequence is KEGKDKSEGGENGNHTEQ. Residues 133–483 form the PUM-HD domain; it reads RLRVKTPPLP…ELLSKFAPMF (351 aa). Pumilio repeat units lie at residues 155-191, 192-227, 228-264, 340-376, 377-413, and 415-450; these read ELSK…QIVD, ALKG…TIIN, ELHG…QMIK, ELLH…LILK, ALKN…KTFS, and TVKE…PIVK.

The protein belongs to the PUF6 family. In terms of assembly, component of the ASH1 mRNP composed of at least PUF6, SHE2, SHE3, SHE1 and the ASH1 mRNA. Interacts with SHE2 and FUN12. Post-translationally, phosphorylation by CK2 relieves translational repression activity.

It localises to the bud tip. It is found in the nucleus. The protein resides in the nucleolus. Its function is as follows. RNA-binding protein involved in post-transcriptional regulation. Component of the ASH1 mRNP which transports the ASH1 mRNA to the distal tip of the bud, where the ASH1 protein is translated and targeted to the daughter cell nucleus. Binds to the ASH1 3'-UTR containing the PUF consensus UUGU segment and represses its translation. This silencing of ASH1 mRNA is critical for asymmetric seggregation of ASH1 to the daughter cell nucleus. The polypeptide is Pumilio homology domain family member 6 (PUF6) (Saccharomyces cerevisiae (strain ATCC 204508 / S288c) (Baker's yeast)).